The sequence spans 206 residues: FKBP-type 22 kDa peptidyl-prolyl cis-trans isomerase (206 aa).

Residues 120–206 (TDRVRVHYTG…VFEVELLEIL (87 aa)) form the PPIase FKBP-type domain.

As to quaternary structure, homodimer.

It localises to the cytoplasm. The protein resides in the periplasm. The catalysed reaction is [protein]-peptidylproline (omega=180) = [protein]-peptidylproline (omega=0). Strongly inhibited by FK506. In terms of biological role, PPIases accelerate the folding of proteins. Catalyzes the cis-trans isomerization of proline imidic peptide bonds in oligopeptides. Displays a preference for substrates with a lysyl residue in the P1 position. In Escherichia coli (strain K12), this protein is FKBP-type 22 kDa peptidyl-prolyl cis-trans isomerase (fklB).